A 68-amino-acid polypeptide reads, in one-letter code: Protein SlyX homolog (68 aa).

This sequence belongs to the SlyX family.

The sequence is that of Protein SlyX homolog from Pseudomonas fluorescens (strain Pf0-1).